A 331-amino-acid polypeptide reads, in one-letter code: MRRGLLLLNLGTPDNADIRAVKLYLREFLTDKRVIDLPTIPRYILVYCLILPFRSPKSAQAYQSIWTEKGSPLLYHSQNLVTKLQSALKDEYKIALGMRYGTPSITTALAELKDCHSLTILPLFPQYSSAATGSAIEKTLSYLANQEIIPSIKIIRDFYQRPEYIQAQAKIMKPYIKDNFHVLFSYHGIPERHIHKSGCDTLCPQTCTPIYDKNQACYRAQCYQTSLLLAKELQLGTHQYTTAFQSRLGKTPWIKPYTDEIFAELISKGIKNIVVSCPSFVADCLETLEEIGIRAKEQWEKLGGEQFILTPCMNDHPEWIKAIQSIVNEQF.

Residues histidine 187 and glutamate 286 each contribute to the Fe cation site.

Belongs to the ferrochelatase family.

The protein localises to the cytoplasm. It catalyses the reaction heme b + 2 H(+) = protoporphyrin IX + Fe(2+). It participates in porphyrin-containing compound metabolism; protoheme biosynthesis; protoheme from protoporphyrin-IX: step 1/1. Catalyzes the ferrous insertion into protoporphyrin IX. This Legionella pneumophila (strain Lens) protein is Ferrochelatase.